The sequence spans 91 residues: Probable Fe(2+)-trafficking protein (91 aa).

This sequence belongs to the Fe(2+)-trafficking protein family.

In terms of biological role, could be a mediator in iron transactions between iron acquisition and iron-requiring processes, such as synthesis and/or repair of Fe-S clusters in biosynthetic enzymes. The protein is Probable Fe(2+)-trafficking protein of Burkholderia mallei (strain NCTC 10247).